A 259-amino-acid polypeptide reads, in one-letter code: Type III pantothenate kinase (259 aa).

Residue 6 to 13 (DVGNTNCT) participates in ATP binding. Substrate is bound at residue 107–110 (GSDR). Asp109 functions as the Proton acceptor in the catalytic mechanism. Asp129 provides a ligand contact to K(+). Residue Thr132 participates in ATP binding. Thr184 is a binding site for substrate.

This sequence belongs to the type III pantothenate kinase family. Homodimer. NH4(+) is required as a cofactor. Requires K(+) as cofactor.

It is found in the cytoplasm. It carries out the reaction (R)-pantothenate + ATP = (R)-4'-phosphopantothenate + ADP + H(+). Its pathway is cofactor biosynthesis; coenzyme A biosynthesis; CoA from (R)-pantothenate: step 1/5. Its function is as follows. Catalyzes the phosphorylation of pantothenate (Pan), the first step in CoA biosynthesis. This chain is Type III pantothenate kinase, found in Listeria welshimeri serovar 6b (strain ATCC 35897 / DSM 20650 / CCUG 15529 / CIP 8149 / NCTC 11857 / SLCC 5334 / V8).